A 342-amino-acid chain; its full sequence is Bifunctional terpene synthase Agr4 (342 aa).

Residues aspartate 87, asparagine 222, serine 226, and glutamate 230 each contribute to the Mg(2+) site. The DDXXD motif motif lies at 87–91 (DEVSD). 2 residues coordinate (2E,6E)-farnesyl diphosphate: arginine 308 and tyrosine 309.

Belongs to the terpene synthase family. Requires Mg(2+) as cofactor.

The enzyme catalyses (2E,6E)-farnesyl diphosphate = delta-cadinene + diphosphate. It carries out the reaction (2E,6E)-farnesyl diphosphate = gamma-muurolene + diphosphate. It catalyses the reaction (2E,6E)-farnesyl diphosphate = beta-copaene + diphosphate. The catalysed reaction is (2E)-geranyl diphosphate = beta-myrcene + diphosphate. Functionally, terpene cyclase that catalyzes the cyclization of farnesyl diphosphate (FPP) to various sesquiterpenes, including beta-copaene, alpha-cubebene, cadina-1(6),4-diene, gamma-muurolene, delta-cadinene, epizonarene, epicubenol and cubenol. Agr4 is also able to use the monoterpene precursor geranyl diphosphate (GPP) as substrates to synthesize the monoterpene beta-myrcene. Delta-cadinene is the major product of Agr4. In Cyclocybe aegerita (Black poplar mushroom), this protein is Bifunctional terpene synthase Agr4.